Consider the following 423-residue polypeptide: Glutamate-1-semialdehyde 2,1-aminomutase (423 aa).

N6-(pyridoxal phosphate)lysine is present on Lys-262.

The protein belongs to the class-III pyridoxal-phosphate-dependent aminotransferase family. HemL subfamily. Pyridoxal 5'-phosphate serves as cofactor.

The protein localises to the cytoplasm. It carries out the reaction (S)-4-amino-5-oxopentanoate = 5-aminolevulinate. Its pathway is porphyrin-containing compound metabolism; protoporphyrin-IX biosynthesis; 5-aminolevulinate from L-glutamyl-tRNA(Glu): step 2/2. This is Glutamate-1-semialdehyde 2,1-aminomutase from Methanosphaera stadtmanae (strain ATCC 43021 / DSM 3091 / JCM 11832 / MCB-3).